The primary structure comprises 382 residues: ATP phosphoribosyltransferase regulatory subunit (382 aa).

The protein belongs to the class-II aminoacyl-tRNA synthetase family. HisZ subfamily. In terms of assembly, heteromultimer composed of HisG and HisZ subunits.

It localises to the cytoplasm. It functions in the pathway amino-acid biosynthesis; L-histidine biosynthesis; L-histidine from 5-phospho-alpha-D-ribose 1-diphosphate: step 1/9. Required for the first step of histidine biosynthesis. May allow the feedback regulation of ATP phosphoribosyltransferase activity by histidine. The sequence is that of ATP phosphoribosyltransferase regulatory subunit from Burkholderia cenocepacia (strain ATCC BAA-245 / DSM 16553 / LMG 16656 / NCTC 13227 / J2315 / CF5610) (Burkholderia cepacia (strain J2315)).